We begin with the raw amino-acid sequence, 416 residues long: Homeobox even-skipped homolog protein 1 (416 aa).

2 disordered regions span residues 30–120 (AVSS…SDFY) and 138–178 (YQHS…LACS). The segment covering 72 to 82 (GLAGSAAGLGA) has biased composition (low complexity). Residues 102–114 (DSLSGQGQPSSSD) show a composition bias toward polar residues. A DNA-binding region (homeobox) is located at residues 183–242 (MRRYRTAFTREQIARLEKEFYRENYVSRPRRCELAAALNLPETTIKVWFQNRRMKDKRQR).

This sequence belongs to the even-skipped homeobox family.

The protein localises to the nucleus. In terms of biological role, may play a role in the specification of neuronal cell types. May play a role in the dorsoventral specification of mesodermal cell fate. The chain is Homeobox even-skipped homolog protein 1 (Evx1) from Mus musculus (Mouse).